We begin with the raw amino-acid sequence, 214 residues long: Cell division protein SepF (214 aa).

The disordered stretch occupies residues 24-120; that stretch reads DNYEEYEERK…NTRRAQESTA (97 aa). Positions 30–40 are enriched in basic and acidic residues; that stretch reads EERKAVNEPPR. Positions 55–67 are enriched in polar residues; the sequence is ESYSQPAYTQQSE. A compositionally biased stretch (basic and acidic residues) spans 69–98; sequence VVEKPSARYRSAEAHQERDTQQAAYTEKKV. Polar residues predominate over residues 101-120; that stretch reads MRSSNQSATTNTRRAQESTA.

This sequence belongs to the SepF family. Homodimer. Interacts with FtsZ.

It localises to the cytoplasm. Functionally, cell division protein that is part of the divisome complex and is recruited early to the Z-ring. Probably stimulates Z-ring formation, perhaps through the cross-linking of FtsZ protofilaments. Its function overlaps with FtsA. This is Cell division protein SepF from Enterococcus faecalis (strain ATCC 700802 / V583).